The chain runs to 208 residues: GTP cyclohydrolase 1 (208 aa).

Cys-98, His-101, and Cys-169 together coordinate Zn(2+).

It belongs to the GTP cyclohydrolase I family. As to quaternary structure, toroid-shaped homodecamer, composed of two pentamers of five dimers.

The enzyme catalyses GTP + H2O = 7,8-dihydroneopterin 3'-triphosphate + formate + H(+). Its pathway is cofactor biosynthesis; 7,8-dihydroneopterin triphosphate biosynthesis; 7,8-dihydroneopterin triphosphate from GTP: step 1/1. In Agrobacterium fabrum (strain C58 / ATCC 33970) (Agrobacterium tumefaciens (strain C58)), this protein is GTP cyclohydrolase 1.